A 450-amino-acid polypeptide reads, in one-letter code: Casein kinase 1-like protein 1 (450 aa).

Residues 9-278 (FRLGRKIGSG…LKRIFRDLFI (270 aa)) enclose the Protein kinase domain. Residues 15–23 (IGSGSFGEI) and lysine 38 contribute to the ATP site. The active-site Proton acceptor is the aspartate 128. Positions 311–450 (AVGTSAALPP…LQVSDEHHPH (140 aa)) are disordered. Basic and acidic residues predominate over residues 328-342 (YTGEEEGRPHMESSR). A compositionally biased stretch (polar residues) spans 349–365 (LDNSGNISNQPTSSSAR). Over residues 371 to 382 (SSSLFAQSAGSS) the composition is skewed to low complexity.

This sequence belongs to the protein kinase superfamily. CK1 Ser/Thr protein kinase family. Casein kinase I subfamily. As to quaternary structure, monomer. In terms of processing, autophosphorylated. Expressed in flowers.

The protein localises to the cytoplasm. The protein resides in the cell junction. Its subcellular location is the plasmodesma. It carries out the reaction L-seryl-[protein] + ATP = O-phospho-L-seryl-[protein] + ADP + H(+). It catalyses the reaction L-threonyl-[protein] + ATP = O-phospho-L-threonyl-[protein] + ADP + H(+). Functionally, casein kinases are operationally defined by their preferential utilization of acidic proteins such as caseins as substrates. It can phosphorylate a large number of proteins. This is Casein kinase 1-like protein 1 from Arabidopsis thaliana (Mouse-ear cress).